The sequence spans 428 residues: Cholecystokinin receptor type A (428 aa).

Topologically, residues 1–41 (MDVVDSLLVNGSNITPPCELGLENETLFCLDQPRPSKEWQP) are extracellular. N-linked (GlcNAc...) asparagine glycans are attached at residues Asn-10 and Asn-24. Cysteines 18 and 29 form a disulfide. A helical transmembrane segment spans residues 42–67 (AVQILLYSLIFLLSVLGNTLVITVLI). Topologically, residues 68–77 (RNKRMRTVTN) are cytoplasmic. The chain crosses the membrane as a helical span at residues 78 to 104 (IFLLSLAVSDLMLCLFCMPFNLIPNLL). At 105 to 115 (KDFIFGSAVCK) the chain is on the extracellular side. An intrachain disulfide couples Cys-114 to Cys-196. Residues 116–137 (TTTYFMGTSVSVSTFNLVAISL) form a helical membrane-spanning segment. The Cytoplasmic portion of the chain corresponds to 138–157 (ERYGAICKPLQSRVWQTKSH). A helical membrane pass occupies residues 158-178 (ALKVIAATWCLSFTIMTPYPI). Residues 179-210 (YSNLVPFTKNNNQTANMCRFLLPNDVMQQSWH) are Extracellular-facing. Asn-190 is a glycosylation site (N-linked (GlcNAc...) asparagine). Residues 211–234 (TFLLLILFLIPGIVMMVAYGLISL) form a helical membrane-spanning segment. The Cytoplasmic portion of the chain corresponds to 235-313 (ELYQGIKFEA…NLMAKKRVIR (79 aa)). The interval 248-272 (KSAKERKPSTTSSGKYEDSDGCYLQ) is disordered. Residues 314-334 (MLIVIVVLFFLCWMPIFSANA) form a helical membrane-spanning segment. Residues 335–349 (WRAYDTASAERRLSG) lie on the Extracellular side of the membrane. Residues 350–373 (TPISFILLLSYTSSCVNPIIYCFM) form a helical membrane-spanning segment. Over 374-428 (NKRFRLGFMATFPCCPNPGPPGARGEVGEEEEGGTTGASLSRFSYSHMSASVPPQ) the chain is Cytoplasmic. Cys-387 carries the S-palmitoyl cysteine lipid modification. A disordered region spans residues 394–428 (PGARGEVGEEEEGGTTGASLSRFSYSHMSASVPPQ). The segment covering 411–422 (ASLSRFSYSHMS) has biased composition (polar residues).

It belongs to the G-protein coupled receptor 1 family.

Its subcellular location is the cell membrane. Functionally, receptor for cholecystokinin. Mediates pancreatic growth and enzyme secretion, smooth muscle contraction of the gall bladder and stomach. Has a 1000-fold higher affinity for CCK rather than for gastrin. It modulates feeding and dopamine-induced behavior in the central and peripheral nervous system. This receptor mediates its action by association with G proteins that activate a phosphatidylinositol-calcium second messenger system. The chain is Cholecystokinin receptor type A (CCKAR) from Homo sapiens (Human).